A 412-amino-acid polypeptide reads, in one-letter code: Indian hedgehog B protein (412 aa).

Positions 1–23 are cleaved as a signal peptide; the sequence is MRLSTAAALLTGFILAFSPAYDG. Cysteine 24 carries the N-palmitoyl cysteine lipid modification. Positions 89, 90, 95, 125, 126, 129, and 131 each coordinate Ca(2+). The Zn(2+) site is built by histidine 140, aspartate 147, and histidine 182. Glycine 197 is lipidated: Cholesterol glycine ester.

This sequence belongs to the hedgehog family. As to quaternary structure, multimer. Interacts with BOC and CDON. Interacts with PTCH1. Interacts with glypican GPC3. Post-translationally, cholesterylation is required for N-product targeting to lipid rafts and multimerization. The C-terminal domain displays an autoproteolysis activity and a cholesterol transferase activity. Both activities result in the cleavage of the full-length protein and covalent attachment of a cholesterol moiety to the C-terminal of the newly generated N-product. The N-product is the active species in both local and long-range signaling, whereas the C-product is degraded in the endoplasmic reticulum. In terms of processing, N-palmitoylation by HHAT of N-product is required for indian hedgehog protein N-product multimerization and full activity. Expressed exclusively in the notochord.

The protein resides in the cell membrane. The protein localises to the endoplasmic reticulum membrane. Its subcellular location is the golgi apparatus membrane. It localises to the secreted. The catalysed reaction is glycyl-L-cysteinyl-[protein] + cholesterol + H(+) = [protein]-C-terminal glycyl cholesterol ester + N-terminal L-cysteinyl-[protein]. In terms of biological role, signal involved in the early induction and patterning of anterodorsal ectoderm, nervous system and somites. It is involved in the regulation of endochondral skeleton formation, and the development of retinal pigment epithelium (RPE), photoreceptors and periocular tissues. Functionally, the C-terminal part of the indian hedgehog protein precursor displays an autoproteolysis and a cholesterol transferase activity. Both activities result in the cleavage of the full-length protein into two parts followed by the covalent attachment of a cholesterol moiety to the C-terminal of the newly generated N-product. Both activities occur in the endoplasmic reticulum. The dually lipidated indian hedgehog protein N-product is a morphogen which is essential for a variety of patterning events during development. Binds to the patched (PTCH1) receptor, which functions in association with smoothened (SMO), to activate the transcription of target genes. In the notochord, induces somite patterning and muscle pioneer differentiation. The protein is Indian hedgehog B protein (ihhb) of Danio rerio (Zebrafish).